A 539-amino-acid polypeptide reads, in one-letter code: O-phosphoserine--tRNA(Cys) ligase (539 aa).

Substrate contacts are provided by residues 188 to 190 (HMT), 233 to 235 (SAS), 275 to 276 (YY), and asparagine 327.

It belongs to the class-II aminoacyl-tRNA synthetase family. O-phosphoseryl-tRNA(Cys) synthetase subfamily. As to quaternary structure, homotetramer. Interacts with SepCysS.

The enzyme catalyses tRNA(Cys) + O-phospho-L-serine + ATP = O-phospho-L-seryl-tRNA(Cys) + AMP + diphosphate. In terms of biological role, catalyzes the attachment of O-phosphoserine (Sep) to tRNA(Cys). This chain is O-phosphoserine--tRNA(Cys) ligase, found in Methanococcoides burtonii (strain DSM 6242 / NBRC 107633 / OCM 468 / ACE-M).